Here is a 403-residue protein sequence, read N- to C-terminus: Histidine decarboxylase (403 aa).

H120 lines the substrate pocket. K233 is subject to N6-(pyridoxal phosphate)lysine.

Belongs to the group II decarboxylase family. In terms of assembly, homotetramer. Requires pyridoxal 5'-phosphate as cofactor.

The catalysed reaction is L-histidine + H(+) = histamine + CO2. The polypeptide is Histidine decarboxylase (Pseudomonas entomophila (strain L48)).